The chain runs to 266 residues: Putative pyruvate, phosphate dikinase regulatory protein (266 aa).

Position 149–156 (149–156 (GVSRTSKT)) interacts with ADP.

It belongs to the pyruvate, phosphate/water dikinase regulatory protein family. PDRP subfamily.

It catalyses the reaction N(tele)-phospho-L-histidyl/L-threonyl-[pyruvate, phosphate dikinase] + ADP = N(tele)-phospho-L-histidyl/O-phospho-L-threonyl-[pyruvate, phosphate dikinase] + AMP + H(+). The catalysed reaction is N(tele)-phospho-L-histidyl/O-phospho-L-threonyl-[pyruvate, phosphate dikinase] + phosphate + H(+) = N(tele)-phospho-L-histidyl/L-threonyl-[pyruvate, phosphate dikinase] + diphosphate. Bifunctional serine/threonine kinase and phosphorylase involved in the regulation of the pyruvate, phosphate dikinase (PPDK) by catalyzing its phosphorylation/dephosphorylation. The chain is Putative pyruvate, phosphate dikinase regulatory protein from Halothermothrix orenii (strain H 168 / OCM 544 / DSM 9562).